Here is a 311-residue protein sequence, read N- to C-terminus: Aspartate carbamoyltransferase catalytic subunit (311 aa).

2 residues coordinate carbamoyl phosphate: arginine 59 and threonine 60. Position 87 (lysine 87) interacts with L-aspartate. Carbamoyl phosphate is bound by residues arginine 109, histidine 139, and glutamine 142. L-aspartate-binding residues include arginine 172 and arginine 224. Residues alanine 265 and proline 266 each contribute to the carbamoyl phosphate site.

Belongs to the aspartate/ornithine carbamoyltransferase superfamily. ATCase family. As to quaternary structure, heterododecamer (2C3:3R2) of six catalytic PyrB chains organized as two trimers (C3), and six regulatory PyrI chains organized as three dimers (R2).

The catalysed reaction is carbamoyl phosphate + L-aspartate = N-carbamoyl-L-aspartate + phosphate + H(+). The protein operates within pyrimidine metabolism; UMP biosynthesis via de novo pathway; (S)-dihydroorotate from bicarbonate: step 2/3. Functionally, catalyzes the condensation of carbamoyl phosphate and aspartate to form carbamoyl aspartate and inorganic phosphate, the committed step in the de novo pyrimidine nucleotide biosynthesis pathway. This is Aspartate carbamoyltransferase catalytic subunit from Streptococcus pyogenes serotype M4 (strain MGAS10750).